A 564-amino-acid chain; its full sequence is Alpha-amylase 3 (564 aa).

The signal sequence occupies residues 1–21; that stretch reads MFGVYFVLLFLSSALIHVANA. A disulfide bridge links cysteine 51 with cysteine 59. 2 residues coordinate substrate: asparagine 56 and tryptophan 105. Position 143 (asparagine 143) interacts with Ca(2+). The cysteines at positions 172 and 188 are disulfide-linked. N-linked (GlcNAc...) asparagine glycosylation occurs at asparagine 181. Residue aspartate 198 participates in Ca(2+) binding. Position 227 (arginine 227) interacts with substrate. Position 229 (aspartate 229) interacts with Ca(2+). Residue aspartate 229 is the Nucleophile of the active site. Residue 232-233 participates in substrate binding; sequence KM. Residue asparagine 235 is glycosylated (N-linked (GlcNAc...) asparagine). Glutamate 253 is a binding site for Ca(2+). Glutamate 253 (proton donor) is an active-site residue. Residues cysteine 263 and cysteine 306 are joined by a disulfide bond. N-linked (GlcNAc...) asparagine glycans are attached at residues asparagine 282 and asparagine 305. Residues aspartate 322 and arginine 369 each coordinate substrate. N-linked (GlcNAc...) asparagine glycosylation is found at asparagine 438, asparagine 447, and asparagine 498. Serine 538 carries GPI-anchor amidated serine lipidation. Residues 539–564 constitute a propeptide, removed in mature form; the sequence is SSRLILSFKTLVFGLGVTAMLFVLFF.

Belongs to the glycosyl hydrolase 13 family. It depends on Ca(2+) as a cofactor. In terms of processing, N-glycosylated.

The protein localises to the cell membrane. It catalyses the reaction Endohydrolysis of (1-&gt;4)-alpha-D-glucosidic linkages in polysaccharides containing three or more (1-&gt;4)-alpha-linked D-glucose units.. Its function is as follows. Has a role in cell wall biosynthesis where it is involved in maintaining cell wall strength and shape. The chain is Alpha-amylase 3 (aah3) from Schizosaccharomyces pombe (strain 972 / ATCC 24843) (Fission yeast).